The following is a 447-amino-acid chain: Elongation factor 1-alpha (447 aa).

Residues Lys-5–Ser-230 form the tr-type G domain. The tract at residues Gly-14–Ser-21 is G1. GTP is bound at residue Gly-14–Ser-21. Lys-55 bears the N6,N6-dimethyllysine mark. The segment at Gly-70 to Asp-74 is G2. N6,N6,N6-trimethyllysine is present on Lys-79. The interval Asp-91–Gly-94 is G3. GTP is bound by residues Asp-91–His-95 and Asn-153–Asp-156. A G4 region spans residues Asn-153 to Asp-156. Position 187 is an N6,N6,N6-trimethyllysine (Lys-187). Residues Ser-194–Phe-196 are G5. An N6-methyllysine modification is found at Lys-261. Position 289 is a 5-glutamyl glycerylphosphorylethanolamine (Glu-289). Lys-306 is modified (N6,N6,N6-trimethyllysine). Position 362 is a 5-glutamyl glycerylphosphorylethanolamine (Glu-362). The residue at position 396 (Lys-396) is an N6,N6,N6-trimethyllysine.

This sequence belongs to the TRAFAC class translation factor GTPase superfamily. Classic translation factor GTPase family. EF-Tu/EF-1A subfamily.

It is found in the cytoplasm. Its function is as follows. This protein promotes the GTP-dependent binding of aminoacyl-tRNA to the A-site of ribosomes during protein biosynthesis. The protein is Elongation factor 1-alpha of Hordeum vulgare (Barley).